The primary structure comprises 544 residues: Calcium-dependent protein kinase 6 (544 aa).

Positions 1 to 47 are disordered; the sequence is MGNSCRGSFKDKIYEGNHSRPEENSKSTTTTVSSVHSPTTDQDFSKQ. G2 is lipidated: N-myristoyl glycine. A compositionally biased stretch (basic and acidic residues) spans 8-25; the sequence is SFKDKIYEGNHSRPEENS. Low complexity predominate over residues 26-40; sequence KSTTTTVSSVHSPTT. The Protein kinase domain maps to 85–343; that stretch reads YTLSRKLGQG…AHEVLRHPWI (259 aa). ATP is bound by residues 91–99 and K114; that span reads LGQGQFGTT. D209 acts as the Proton acceptor in catalysis. S249 is subject to Phosphoserine. The tract at residues 349 to 379 is autoinhibitory domain; that stretch reads APDRALDPAVLSRLKQFSAMNKLKKMALKVI. EF-hand domains lie at 386-421, 422-457, 458-493, and 497-527; these read EEIA…YGST, LKDT…LNKL, EREE…HGMT, and LEDI…GNAG. Ca(2+) is bound by residues D399, D401, S403, E410, D435, D437, S439, T441, E446, D471, D473, S475, Y477, E482, D505, D507, D509, R511, and E516.

This sequence belongs to the protein kinase superfamily. Ser/Thr protein kinase family. CDPK subfamily. In terms of assembly, interacts with SLAC1. Interacts with FD. Expressed in both guard cells and mesophyll cells. Expressed in the shoot apical meristem.

It is found in the cell membrane. The protein localises to the nucleus. It carries out the reaction L-seryl-[protein] + ATP = O-phospho-L-seryl-[protein] + ADP + H(+). It catalyses the reaction L-threonyl-[protein] + ATP = O-phospho-L-threonyl-[protein] + ADP + H(+). Activated by calcium. Autophosphorylation may play an important role in the regulation of the kinase activity. Functionally, may play a role in signal transduction pathways that involve calcium as a second messenger. Functions in abscisic acid (ABA) regulation of guard cell S-type anion- and Ca(2+)-permeable channels and stomatal closure. Phosphorylates FD. The polypeptide is Calcium-dependent protein kinase 6 (CPK6) (Arabidopsis thaliana (Mouse-ear cress)).